A 333-amino-acid polypeptide reads, in one-letter code: Acyl-CoA wax alcohol acyltransferase 2 (333 aa).

3 helical membrane passes run 15–35, 38–58, and 130–150; these read VFAV…VIAV, YLVV…WLAF, and IFPG…MPFL.

It belongs to the diacylglycerol acyltransferase family. In terms of assembly, monomer. Highly expressed in skin, where it is primarily restricted to undifferentiated peripheral sebocytes. Also expressed at lower level in other tissues except pancreas.

It localises to the endoplasmic reticulum membrane. It carries out the reaction a long chain fatty alcohol + a fatty acyl-CoA = a wax ester + CoA. It catalyses the reaction all-trans-retinol + an acyl-CoA = an all-trans-retinyl ester + CoA. The catalysed reaction is an acyl-CoA + a 1,2-diacyl-sn-glycerol = a triacyl-sn-glycerol + CoA. The enzyme catalyses 11-cis-retinol + a fatty acyl-CoA = 11-cis-retinyl ester + CoA. It carries out the reaction 9-cis-retinol + a fatty acyl-CoA = 9-cis-retinyl ester + CoA. It catalyses the reaction 13-cis-retinol + a fatty acyl-CoA = 13-cis-retinyl ester + CoA. The catalysed reaction is a 1-acylglycerol + an acyl-CoA = a 1,2-diacylglycerol + CoA. The enzyme catalyses 1-O-alkylglycerol + an acyl-CoA = 1-O-alkyl-3-acylglycerol + CoA. It carries out the reaction a 2-acylglycerol + an acyl-CoA = a 1,2-diacyl-sn-glycerol + CoA. It catalyses the reaction 2-(9Z-octadecenoyl)-glycerol + hexadecanoyl-CoA = 1-hexadecanoyl-2-(9Z-octadecenoyl)-sn-glycerol + CoA. The catalysed reaction is 1,2-di-(9Z-octadecenoyl)-sn-glycerol + hexadecanoyl-CoA = 1,2-di-(9Z)-octadecenoyl-3-hexadecanoyl-sn-glycerol + CoA. The enzyme catalyses hexadecan-1-ol + hexadecanoyl-CoA = hexadecanyl hexadecanoate + CoA. It carries out the reaction hexadecane-1,2-diol + hexadecanoyl-CoA = 2-hydroxyhexadecyl hexadecanoate + CoA. It catalyses the reaction 9-cis-retinol + hexadecanoyl-CoA = 9-cis-retinyl hexadecanoate + CoA. The catalysed reaction is all-trans-retinol + hexadecanoyl-CoA = all-trans-retinyl hexadecanoate + CoA. The enzyme catalyses 1,2-di-(9Z-octadecenoyl)-sn-glycerol + (9Z)-octadecenoyl-CoA = 1,2,3-tri-(9Z-octadecenoyl)-glycerol + CoA. It carries out the reaction hexadecan-1-ol + (9Z)-octadecenoyl-CoA = hexadecanyl (9Z)-octadecenoate + CoA. It catalyses the reaction (9Z)-hexadecen-1-ol + (9Z)-octadecenoyl-CoA = 1-O-(9Z)-hexadecenyl (9Z)-octadecenoate + CoA. The catalysed reaction is octadecan-1-ol + (9Z)-octadecenoyl-CoA = 1-O-octadecyl (9Z)-octadecenoate + CoA. The enzyme catalyses (9Z)-octadecen-1-ol + (9Z)-octadecenoyl-CoA = 1-O-(9Z)-octadecenyl (9Z)-octadecenoate + CoA. It carries out the reaction hexadecan-1-ol + (9Z)-hexadecenoyl-CoA = 1-O-hexadecyl (9Z)-hexadecenoate + CoA. It catalyses the reaction hexadecan-1-ol + octadecanoyl-CoA = hexadecanyl octadecanoate + CoA. The catalysed reaction is 11-cis-retinol + hexadecanoyl-CoA = 11-cis-retinyl hexadecanoate + CoA. The enzyme catalyses 1-O-(9Z-octadecenyl)-glycerol + (9Z)-octadecenoyl-CoA = 1-O-(9Z-octadecyl)-3-(9Z-octadecenoyl)-glycerol + CoA. It carries out the reaction 1-(9Z-octadecenoyl)-glycerol + (9Z)-octadecenoyl-CoA = 1,2-di-(9Z-octadecenoyl)-glycerol + CoA. It catalyses the reaction 11-cis-retinol + tetradecanoyl-CoA = 11-cis-retinyl tetradecanoate + CoA. The catalysed reaction is 9-cis-retinol + tetradecanoyl-CoA = 9-cis-retinyl tetradecanoate + CoA. The enzyme catalyses 13-cis-retinol + tetradecanoyl-CoA = 13-cis-retinyl tetradecanoate + CoA. It carries out the reaction all-trans-retinol + tetradecanoyl-CoA = all-trans-retinyl tetradecanoate + CoA. It catalyses the reaction tetradecan-1-ol + tetradecanoyl-CoA = tetradecanyl tetradecanoate + CoA. 11-cis retinoids act as allosteric modulators of acyl-CoA retinol O-fatty-acyltransferase (ARAT) activity by suppressing esterification of 9-cis, 13-cis, or all-trans retinols concurrently increasing the enzyme specificity toward 11-cis isomer. In terms of biological role, acyltransferase that catalyzes the formation of ester bonds between fatty alcohols and fatty acyl-CoAs to form wax monoesters. Shows a preference for medium chain acyl-CoAs from C12 to C16 in length and fatty alcohols shorter than C20, as the acyl donors and acceptors, respectively. Also possesses acyl-CoA retinol acyltransferase (ARAT) activity that preferentially esterifies 11-cis-retinol, a chromophore precursor of bleached opsin pigments in cone cells. Shows higher catalytic efficiency toward 11-cis-retinol versus 9-cis-retinol, 13-cis-retinol, and all-trans-retinol substrates. The polypeptide is Acyl-CoA wax alcohol acyltransferase 2 (AWAT2) (Homo sapiens (Human)).